Reading from the N-terminus, the 338-residue chain is E3 ubiquitin-protein ligase RING1 (338 aa).

The segment at Thr102–Gly124 is disordered. The segment covering Ile110 to Thr121 has biased composition (polar residues). Residues Cys224–Arg265 form an RING-type; atypical zinc finger. 2 stretches are compositionally biased toward basic and acidic residues: residues Glu267 to Val279 and Ser298 to Phe309. Positions Glu267–Asp338 are disordered.

In terms of processing, auto-ubiquitinated as part of the enzymatic reaction. In terms of tissue distribution, mostly expressed in cotton fibers, and, to a lower extent, in leaves and flowers.

It catalyses the reaction S-ubiquitinyl-[E2 ubiquitin-conjugating enzyme]-L-cysteine + [acceptor protein]-L-lysine = [E2 ubiquitin-conjugating enzyme]-L-cysteine + N(6)-ubiquitinyl-[acceptor protein]-L-lysine.. It functions in the pathway protein modification; protein ubiquitination. E3 ubiquitin-protein ligase which accepts ubiquitin from an E2 ubiquitin-conjugating enzyme in the form of a thioester and then directly transfers the ubiquitin to targeted substrates. Promotes polyubiquitination of target proteins. The protein is E3 ubiquitin-protein ligase RING1 (RING1) of Gossypium hirsutum (Upland cotton).